The following is a 126-amino-acid chain: MAILGLGTDIVEIARIEAVISRSGERLARRVLSDNEWDIWETHQQPVRFLAKRFAVKEAAAKAFGTGIRNGLAFNQFEVFNDELGKPRLRLWGEALILAEKLGVAHMHVTLADERHYACATVILES.

Mg(2+)-binding residues include Asp-9 and Glu-58.

The protein belongs to the P-Pant transferase superfamily. AcpS family. Mg(2+) serves as cofactor.

It is found in the cytoplasm. The enzyme catalyses apo-[ACP] + CoA = holo-[ACP] + adenosine 3',5'-bisphosphate + H(+). Functionally, transfers the 4'-phosphopantetheine moiety from coenzyme A to a Ser of acyl-carrier-protein. This chain is Holo-[acyl-carrier-protein] synthase, found in Salmonella paratyphi B (strain ATCC BAA-1250 / SPB7).